We begin with the raw amino-acid sequence, 211 residues long: Large ribosomal subunit protein uL3 (211 aa).

The disordered stretch occupies residues 134–155 (ATHGNSLSHRAPGSIGQNQTPG). Position 152 is an N5-methylglutamine (Q152).

The protein belongs to the universal ribosomal protein uL3 family. As to quaternary structure, part of the 50S ribosomal subunit. Forms a cluster with proteins L14 and L19. Methylated by PrmB.

Its function is as follows. One of the primary rRNA binding proteins, it binds directly near the 3'-end of the 23S rRNA, where it nucleates assembly of the 50S subunit. This Methylococcus capsulatus (strain ATCC 33009 / NCIMB 11132 / Bath) protein is Large ribosomal subunit protein uL3.